Consider the following 897-residue polypeptide: Alpha-actinin-2 (897 aa).

Positions 1-257 are actin-binding; sequence MNSMNQIETN…IMTYVSCFYH (257 aa). Calponin-homology (CH) domains lie at 41–145 and 154–260; these read KQQR…LRFA and TSAK…HAFA. Spectrin repeat units lie at residues 284–394, 404–509, 519–630, and 640–743; these read RLME…WLLN, HLAE…ALER, QLHL…SLQE, and RLRR…EVET. EF-hand domains are found at residues 756-791 and 792-827; these read EQMNDFRASFNHFDRRKNGLMDHDDFRACLISMGYD and LGEAEFARIMSLVDPNGQGTVTFQSFIDFMTRETAD. 6 residues coordinate Ca(2+): Asp769, Asn773, Asp780, Asp805, Asn807, and Thr811.

The protein belongs to the alpha-actinin family. As to quaternary structure, homodimer; antiparallel. Post-translationally, ubiquitinated by FBXL22, leading to proteasomal degradation.

It localises to the cytoplasm. Its subcellular location is the myofibril. It is found in the sarcomere. The protein localises to the z line. Functionally, F-actin cross-linking protein which is thought to anchor actin to a variety of intracellular structures. This is a bundling protein. The protein is Alpha-actinin-2 (ACTN2) of Gallus gallus (Chicken).